The primary structure comprises 174 residues: UPF0336 protein MAP_3996c (174 aa).

A MaoC-like domain is found at 11-131 (IGSHYRAPDY…VLAEIRSEVT (121 aa)).

Belongs to the UPF0336 family.

The sequence is that of UPF0336 protein MAP_3996c from Mycolicibacterium paratuberculosis (strain ATCC BAA-968 / K-10) (Mycobacterium paratuberculosis).